The primary structure comprises 597 residues: Elongation factor 4 (597 aa).

In terms of domain architecture, tr-type G spans 2-184 (DHIRNFSIIA…SLIAKVPPPK (183 aa)). Residues 14–19 (DHGKST) and 131–134 (NKID) contribute to the GTP site.

Belongs to the TRAFAC class translation factor GTPase superfamily. Classic translation factor GTPase family. LepA subfamily.

It localises to the cell inner membrane. It catalyses the reaction GTP + H2O = GDP + phosphate + H(+). Its function is as follows. Required for accurate and efficient protein synthesis under certain stress conditions. May act as a fidelity factor of the translation reaction, by catalyzing a one-codon backward translocation of tRNAs on improperly translocated ribosomes. Back-translocation proceeds from a post-translocation (POST) complex to a pre-translocation (PRE) complex, thus giving elongation factor G a second chance to translocate the tRNAs correctly. Binds to ribosomes in a GTP-dependent manner. The protein is Elongation factor 4 of Burkholderia cenocepacia (strain HI2424).